An 810-amino-acid polypeptide reads, in one-letter code: F-BAR domain only protein 2 (810 aa).

The F-BAR domain maps to 3–250; that stretch reads MAYFVENFWG…NMANTTVESL (248 aa). The mediates dimerization and binding to membranes enriched in Pi(4,5)-P2 and induces their tubulation stretch occupies residues 3-274; it reads MAYFVENFWG…PGLIEFEECD (272 aa). A coiled-coil region spans residues 87-156; sequence HLDLVRKLQE…CVEQERLKKE (70 aa). A Glycyl lysine isopeptide (Lys-Gly) (interchain with G-Cter in SUMO2) cross-link involves residue K297. The segment at 301–352 is disordered; it reads DAESVECPDADSLNIPDVDEEGYSIKPETNQNDTKENHFYSSSDSDSEDEEP. Phosphoserine is present on S312. T385 carries the post-translational modification Phosphothreonine. A phosphoserine mark is found at S387, S394, and S403. Residues 403–537 form a disordered region; sequence SNEELTKSKP…VSRGPSPVSL (135 aa). The segment covering 433–456 has biased composition (low complexity); it reads PSLDSSSSSSLTSSSSARPTTPLS. Residues S488, S493, S496, S508, S510, S511, and S533 each carry the phosphoserine modification. Residues 502–521 show a composition bias toward low complexity; that stretch reads PLARAESSSSISSSASLSAA. A mediates interaction with DAB2, EPS15, EPS15R and ITSN1 region spans residues 521–810; that stretch reads ANTPTVGVSR…FATGRYLADC (290 aa). The region spanning 542–809 is the MHD domain; sequence TLPVAVALTE…RFATGRYLAD (268 aa).

Belongs to the FCHO family. Homodimer; disulfide-linked. May form homotetramer. Interacts with AP2A1. Interacts with EPS15, EPS15R, ITSN1 and ITSN2; recruit those scaffolding proteins which in turn may interact with the adaptor protein complex AP-2 at the plasma membrane. Interacts with DAB2 (via DPF motifs); mediates LDL receptor/LDLR endocytosis. In terms of processing, ubiquitinated. Mainly undergoes monoubiquitination but also polyubiquitination.

The protein resides in the membrane. It is found in the clathrin-coated pit. Functions in an early step of clathrin-mediated endocytosis. Has both a membrane binding/bending activity and the ability to recruit proteins essential to the formation of functional clathrin-coated pits. Has a lipid-binding activity with a preference for membranes enriched in phosphatidylserine and phosphoinositides (Pi(4,5) biphosphate) like the plasma membrane. Its membrane-bending activity might be important for the subsequent action of clathrin and adaptors in the formation of clathrin-coated vesicles. Involved in adaptor protein complex AP-2-dependent endocytosis of the transferrin receptor, it also functions in the AP-2-independent endocytosis of the LDL receptor. This is F-BAR domain only protein 2 (FCHO2) from Pongo abelii (Sumatran orangutan).